The sequence spans 493 residues: Glutamyl-tRNA(Gln) amidotransferase subunit A (493 aa).

Catalysis depends on charge relay system residues Lys79 and Ser159. Catalysis depends on Ser183, which acts as the Acyl-ester intermediate.

Belongs to the amidase family. GatA subfamily. Heterotrimer of A, B and C subunits.

It carries out the reaction L-glutamyl-tRNA(Gln) + L-glutamine + ATP + H2O = L-glutaminyl-tRNA(Gln) + L-glutamate + ADP + phosphate + H(+). Its function is as follows. Allows the formation of correctly charged Gln-tRNA(Gln) through the transamidation of misacylated Glu-tRNA(Gln) in organisms which lack glutaminyl-tRNA synthetase. The reaction takes place in the presence of glutamine and ATP through an activated gamma-phospho-Glu-tRNA(Gln). The chain is Glutamyl-tRNA(Gln) amidotransferase subunit A from Brucella melitensis biotype 2 (strain ATCC 23457).